A 512-amino-acid polypeptide reads, in one-letter code: UDP-N-acetylglucosamine--peptide N-acetylglucosaminyltransferase GtfA subunit (512 aa).

16 to 19 (GVEY) is a binding site for UDP. H251 contributes to the N-acetyl-D-glucosamine binding site. Residues 393–394 (QH) and 413–416 (EGFG) each bind UDP.

Belongs to the glycosyltransferase group 1 family. Glycosyltransferase 4 subfamily. Forms a heterotetramer with 2 subunits each of GtfA and GtfB. Part of the accessory SecA2/SecY2 protein translocation apparatus.

It is found in the cytoplasm. The protein localises to the cell membrane. It catalyses the reaction L-seryl-[protein] + UDP-N-acetyl-alpha-D-glucosamine = 3-O-[N-acetyl-alpha-D-glucosaminyl]-L-seryl-[protein] + UDP + H(+). It functions in the pathway protein modification; protein glycosylation. Required for polymorphic O-glycosylation of the serine-rich repeat protein (SRRP) in this bacteria. Catalyzes the first step in glycosylation by transferring N-acetylglucosamine from UDP-GlcNAc to serine residues in the substrate protein. Part of the accessory SecA2/SecY2 system specifically required to export serine-rich repeat cell wall proteins encoded in the same operon. The GtfA-GtfB complex adds GlcNAc from UDP-GlcNAc to SRRP (experimentally characterized with a truncated SSR1 construct); the alpha linkage was shown for this enzyme but not the residues glycosylated on SRRP. The polypeptide is UDP-N-acetylglucosamine--peptide N-acetylglucosaminyltransferase GtfA subunit (Limosilactobacillus reuteri subsp. suis (strain ATCC 53608 / LMG 31752 / 1063) (Lactobacillus reuteri)).